Reading from the N-terminus, the 483-residue chain is Endoplasmic reticulum lectin 1 (483 aa).

Residues 1 to 33 form the signal peptide; that stretch reads MEEGGGGVRSLVPGGPVLLVLCGLLEASGGGRA. MRH domains lie at 111–246 and 342–469; these read SSCS…LCSH and SYCF…ICKI. Cys113 and Cys126 form a disulfide bridge. Asn195 is a glycosylation site (N-linked (GlcNAc...) asparagine). Disulfide bonds link Cys199–Cys232, Cys215–Cys244, Cys344–Cys357, Cys421–Cys455, and Cys436–Cys467.

In terms of assembly, may form a complex with OS9, HSPA5, SYVN1, and SEL1L with which it interacts directly. Interacts (via PRKCSH 2 domain) with KREMEN2 (when glycosylated). Interacts with HSPA5. Isoform 1 and isoform 2 are N-glycosylated.

Its subcellular location is the endoplasmic reticulum lumen. Functionally, probable lectin that binds selectively to improperly folded lumenal proteins. May function in endoplasmic reticulum quality control and endoplasmic reticulum-associated degradation (ERAD) of both non-glycosylated proteins and glycoproteins. The chain is Endoplasmic reticulum lectin 1 (ERLEC1) from Homo sapiens (Human).